Here is a 156-residue protein sequence, read N- to C-terminus: ATP synthase subunit b (156 aa).

The chain crosses the membrane as a helical span at residues 3–23 (ITFTIFAQSLAFAALIWIVAT).

This sequence belongs to the ATPase B chain family. F-type ATPases have 2 components, F(1) - the catalytic core - and F(0) - the membrane proton channel. F(1) has five subunits: alpha(3), beta(3), gamma(1), delta(1), epsilon(1). F(0) has three main subunits: a(1), b(2) and c(10-14). The alpha and beta chains form an alternating ring which encloses part of the gamma chain. F(1) is attached to F(0) by a central stalk formed by the gamma and epsilon chains, while a peripheral stalk is formed by the delta and b chains.

Its subcellular location is the cell inner membrane. Functionally, f(1)F(0) ATP synthase produces ATP from ADP in the presence of a proton or sodium gradient. F-type ATPases consist of two structural domains, F(1) containing the extramembraneous catalytic core and F(0) containing the membrane proton channel, linked together by a central stalk and a peripheral stalk. During catalysis, ATP synthesis in the catalytic domain of F(1) is coupled via a rotary mechanism of the central stalk subunits to proton translocation. Its function is as follows. Component of the F(0) channel, it forms part of the peripheral stalk, linking F(1) to F(0). This Xylella fastidiosa (strain M23) protein is ATP synthase subunit b.